A 72-amino-acid chain; its full sequence is Translation initiation factor IF-1 (72 aa).

The S1-like domain maps to 1–72 (MAKADVIEVE…TKGRITFRFK (72 aa)).

It belongs to the IF-1 family. As to quaternary structure, component of the 30S ribosomal translation pre-initiation complex which assembles on the 30S ribosome in the order IF-2 and IF-3, IF-1 and N-formylmethionyl-tRNA(fMet); mRNA recruitment can occur at any time during PIC assembly.

It is found in the cytoplasm. One of the essential components for the initiation of protein synthesis. Stabilizes the binding of IF-2 and IF-3 on the 30S subunit to which N-formylmethionyl-tRNA(fMet) subsequently binds. Helps modulate mRNA selection, yielding the 30S pre-initiation complex (PIC). Upon addition of the 50S ribosomal subunit IF-1, IF-2 and IF-3 are released leaving the mature 70S translation initiation complex. In Limosilactobacillus reuteri (strain DSM 20016) (Lactobacillus reuteri), this protein is Translation initiation factor IF-1.